The sequence spans 172 residues: Biogenesis of lysosome-related organelles complex 1 subunit 6 (172 aa).

A compositionally biased stretch (pro residues) spans 1–10 (MNVPVPPPPD). Disordered stretches follow at residues 1–35 (MNVPVPPPPDGVLTGPSDSLEAGEPTPGLSDRSPD) and 136–172 (ALKLQQQRQKEELEREQQREREFEREKQLTAKPAKRT). A compositionally biased stretch (basic and acidic residues) spans 143-164 (RQKEELEREQQREREFEREKQL).

It belongs to the BLOC1S6 family. In terms of assembly, homodimer. Octamer composed of one copy each BLOC1S1, BLOC1S2, BLOC1S3, BLOC1S4, BLOC1S5, BLOC1S6, DTNBP1/BLOC1S7 and SNAPIN/BLOC1S8. The BLOC-1 complex associates with the AP-3 protein complex and membrane protein cargos. Interacts with BLOC1S4, BLOC1S5, DTNBP1/BLOC1S7, F-actin, SNAP25 isoform 1 and isoform 2, SNAP47 and STX12. Component of the biogenesis of lysosome-related organelles complex 1 (BLOC-1) composed of BLOC1S1, BLOC1S2, BLOC1S3, BLOC1S4, BLOC1S5, BLOC1S6, DTNBP1/BLOC1S7 and SNAPIN/BLOC1S8.

It localises to the cytoplasm. The protein resides in the membrane. In terms of biological role, component of the BLOC-1 complex, a complex that is required for normal biogenesis of lysosome-related organelles (LRO), such as platelet dense granules and melanosomes. In concert with the AP-3 complex, the BLOC-1 complex is required to target membrane protein cargos into vesicles assembled at cell bodies for delivery into neurites and nerve terminals. The BLOC-1 complex, in association with SNARE proteins, is also proposed to be involved in neurite extension. May play a role in intracellular vesicle trafficking, particularly in the vesicle-docking and fusion process. This chain is Biogenesis of lysosome-related organelles complex 1 subunit 6 (Bloc1s6), found in Rattus norvegicus (Rat).